The sequence spans 1216 residues: MFGAGDEDDTDFLSPSGGAKLASLFGLDQATMGHGNEFFQYTAPKQPKKGQGTAAGNQTAPKPAPATTGTSSVLFATAVHAYRYINGQYAKQGKFGAAVLGNHTSREYRILLYISQQQPVTVATIHLNFELMVRPNNYSTFYDDQRQNWSIMFESEKAAVSFNKQVCVAKCNSISSLDAVLCQDLVAAEGPAVETGDSLEVAYTGWLLQNHVLGQVFDSTANKDKPLRLKLGSGKVVKGLEDGLLGMKKGGKRLIITPSACAAGSEGVIGWTQPTDSILVFEVEVRRVKFARDSGSDGHSVSSRDSAAPSPIPASDSLSADPVVTPLPLPLKPGEPGLRSKSNSLSEQLTVNSNPDTVKAKLISRMAKMGQPMLPILPPQLDSNDSETEDATVLRGAGQSLVTPSIQPSLQPAHPVLPQMASQAPQPSGSGLQTPSAALMQAVSLDSHSAVSGNAQNFQPYAGVQAYAYPQTPSVTSQLQPVRPLYPAPLSQAPHFQGSGDMMSFLMTEARQHNTEIRMAVNKVADKMDHLMTKVEELQKHSSGNSMLLPSMSVTMETSMIMSNIQRIIQENERLKQELLEKSSRIEEQNDKISDLIERNQRYVEQSNLMMEKRNNSLQTATENTQARILHAEQEKAKVTEELAAATAQVSHLQLKMTAHQKKETELQLQLTDNLKETDLLRGHVTRLQADLSELREASEQTQTKFKSEKQSRRQLELKVTSLEEELTDLRAEKTSLEKNLSERKKKSAQERCQAEAEMDEIRKSHQEELDRLRQLLKKARVSTDQAAAEQLTLAQAELQSQWEAKCEQLLASARDEHLQQYREVCAQRDAHQQKLALLQDECLALQAQIAAFTEQKEHMQRLEKTKSQAPAGRAAADPSEKVKKIMNQVFQSLRGEFELEESYDGGTILRTIMHTIKMVTLQLLNHQEEEEEEEEEEEEEKKPLRPSLEQPGPATPGMPPAPPSGETQEAPEVLPEQVVGETTPLPLQALPTPENGAQTRKGEPAEAEVPSEIKDSSLPPQPAGIPAHRVLGPPTSIPPKPPGPVTMDSESEEMLAADQRTVQPNGLLGEEHVREVATDGLLQGNSRRLSLTPDPEKGEPPALDPESQGGEAQPPECKQAEDVSSSGPRETLLDTELASAAAGTSLRHNQDSQHCSLSGDEEDELFKGATLKVPRPTAQPEEEDEDEVSMKGRPPPTPLFGDDDDDDDDDIGWLG.

Methionine 1 is modified (N-acetylmethionine). Phosphoserine is present on residues serine 14 and serine 23. Residues 41 to 68 are disordered; it reads YTAPKQPKKGQGTAAGNQTAPKPAPATT. The segment covering 59–68 has biased composition (low complexity); sequence TAPKPAPATT. An important for function in growth cone organization region spans residues 71–168; sequence SSVLFATAVH…AVSFNKQVCV (98 aa). Lysine 91 is modified (N6-acetyllysine). One can recognise a PPIase FKBP-type domain in the interval 196–289; the sequence is GDSLEVAYTG…VFEVEVRRVK (94 aa). The interval 292-357 is disordered; the sequence is RDSGSDGHSV…QLTVNSNPDT (66 aa). The span at 303–322 shows a compositional bias: low complexity; that stretch reads SRDSAAPSPIPASDSLSADP. Phosphoserine occurs at positions 306, 310, 342, 344, and 617. The span at 340 to 356 shows a compositional bias: polar residues; the sequence is SKSNSLSEQLTVNSNPD. Coiled-coil stretches lie at residues 519–790 and 820–865; these read MAVN…AAAE and QQYR…RLEK. The segment at 927–1216 is disordered; sequence HQEEEEEEEE…DDDDDIGWLG (290 aa). The segment covering 929-940 has biased composition (acidic residues); it reads EEEEEEEEEEEE. Serine 948 is subject to Phosphoserine. The segment covering 954–964 has biased composition (pro residues); sequence PATPGMPPAPP. Positions 983 to 994 are enriched in low complexity; that stretch reads TTPLPLQALPTP. A Phosphoserine modification is found at serine 1018. Pro residues predominate over residues 1036–1045; sequence TSIPPKPPGP. 2 positions are modified to phosphoserine: serine 1050 and serine 1091. Phosphothreonine is present on threonine 1093. 5 positions are modified to phosphoserine: serine 1108, serine 1153, serine 1157, serine 1159, and serine 1190. Threonine 1198 carries the phosphothreonine modification. Residues 1202 to 1216 are compositionally biased toward acidic residues; sequence GDDDDDDDDDIGWLG.

The protein belongs to the FKBP-type PPIase family. Interacts with WIP and actin. Interacts with TBC1D23. Expressed in brain, with highest levels in the granular cell layer of cerebellum and in the granule cell layer of dentate gyrus.

The protein resides in the cytoplasm. It is found in the cell projection. The protein localises to the axon. Its subcellular location is the early endosome. Functionally, involved in the transport of early endosomes at the level of transition between microfilament-based and microtubule-based movement. May be involved in the cytoskeletal organization of neuronal growth cones. Seems to be inactive as a PPIase. This Mus musculus (Mouse) protein is FK506-binding protein 15 (Fkbp15).